A 515-amino-acid polypeptide reads, in one-letter code: Bifunctional purine biosynthesis protein PurH (515 aa).

The 145-residue stretch at 1–145 (MTKRALISVS…KNHASVTVVV (145 aa)) folds into the MGS-like domain.

Belongs to the PurH family.

It carries out the reaction (6R)-10-formyltetrahydrofolate + 5-amino-1-(5-phospho-beta-D-ribosyl)imidazole-4-carboxamide = 5-formamido-1-(5-phospho-D-ribosyl)imidazole-4-carboxamide + (6S)-5,6,7,8-tetrahydrofolate. The catalysed reaction is IMP + H2O = 5-formamido-1-(5-phospho-D-ribosyl)imidazole-4-carboxamide. It functions in the pathway purine metabolism; IMP biosynthesis via de novo pathway; 5-formamido-1-(5-phospho-D-ribosyl)imidazole-4-carboxamide from 5-amino-1-(5-phospho-D-ribosyl)imidazole-4-carboxamide (10-formyl THF route): step 1/1. It participates in purine metabolism; IMP biosynthesis via de novo pathway; IMP from 5-formamido-1-(5-phospho-D-ribosyl)imidazole-4-carboxamide: step 1/1. This chain is Bifunctional purine biosynthesis protein PurH, found in Streptococcus agalactiae serotype Ia (strain ATCC 27591 / A909 / CDC SS700).